Consider the following 254-residue polypeptide: uncharacterized protein (254 aa).

A disordered region spans residues 60–161 (PKSPTTTSIS…PEIPQAAPGT (102 aa)). 2 stretches are compositionally biased toward low complexity: residues 63–77 (PTTT…STTP) and 89–146 (TPIP…TTTS).

This is an uncharacterized protein from Caenorhabditis elegans.